A 211-amino-acid chain; its full sequence is Large ribosomal subunit protein uL3 (211 aa).

The interval His126 to Gly147 is disordered.

Belongs to the universal ribosomal protein uL3 family. In terms of assembly, part of the 50S ribosomal subunit. Forms a cluster with proteins L14 and L19.

Functionally, one of the primary rRNA binding proteins, it binds directly near the 3'-end of the 23S rRNA, where it nucleates assembly of the 50S subunit. This chain is Large ribosomal subunit protein uL3, found in Geobacillus thermodenitrificans (strain NG80-2).